A 314-amino-acid chain; its full sequence is Olfactory receptor 5G29 (314 aa).

The Extracellular segment spans residues 1 to 25 (MEEKNQTIVMEFFFLGLTDHLYQKI). The N-linked (GlcNAc...) asparagine glycan is linked to asparagine 5. The chain crosses the membrane as a helical span at residues 26–46 (ALFITILFVYLVTLGGNLGMI). Residues 47–54 (TLIWADPR) lie on the Cytoplasmic side of the membrane. Residues 55–75 (LHTPMYFFLSHLSFVDMCSSS) form a helical membrane-spanning segment. Over 76 to 99 (SIAPKMLCDIFAEEKRISFMGCAA) the chain is Extracellular. Cysteine 97 and cysteine 189 are joined by a disulfide. Residues 100 to 120 (QMWFFGFFVGTECFLLASMAY) traverse the membrane as a helical segment. Topologically, residues 121–133 (DRYTAICKPLLYT) are cytoplasmic. The helical transmembrane segment at 134-154 (LLMSQRVCVHLVVGPYVFAII) threads the bilayer. Residues 155–196 (NITTHTTLAFCLPFCGSNTINHFFCDVSPLLSLACADSWVNK) lie on the Extracellular side of the membrane. The helical transmembrane segment at 197-217 (VVLFVLSGAIGVFSGLIIIVS) threads the bilayer. The Cytoplasmic segment spans residues 218–237 (YVSILMTIFKIQTADGKQKA). A helical membrane pass occupies residues 238–258 (FSTCSSHLSAVSILYGTLFFI). Over 259–271 (YVRPSASFSLNIN) the chain is Extracellular. Residues 272-292 (KMISLFYTVVIPMLNPLIYSL) form a helical membrane-spanning segment. The Cytoplasmic portion of the chain corresponds to 293 to 312 (RNKEVKGAFRRKVQKKHFPA).

The protein belongs to the G-protein coupled receptor 1 family.

The protein resides in the cell membrane. Its function is as follows. Potential odorant receptor. The sequence is that of Olfactory receptor 5G29 from Mus musculus (Mouse).